A 431-amino-acid polypeptide reads, in one-letter code: Serine--tRNA ligase (431 aa).

237–239 provides a ligand contact to L-serine; the sequence is TAE. 268 to 270 provides a ligand contact to ATP; it reads RSE. E291 is an L-serine binding site. Residue 355–358 coordinates ATP; that stretch reads EISS. Position 390 (S390) interacts with L-serine.

The protein belongs to the class-II aminoacyl-tRNA synthetase family. Type-1 seryl-tRNA synthetase subfamily. As to quaternary structure, homodimer. The tRNA molecule binds across the dimer.

The protein localises to the cytoplasm. The catalysed reaction is tRNA(Ser) + L-serine + ATP = L-seryl-tRNA(Ser) + AMP + diphosphate + H(+). The enzyme catalyses tRNA(Sec) + L-serine + ATP = L-seryl-tRNA(Sec) + AMP + diphosphate + H(+). Its pathway is aminoacyl-tRNA biosynthesis; selenocysteinyl-tRNA(Sec) biosynthesis; L-seryl-tRNA(Sec) from L-serine and tRNA(Sec): step 1/1. Functionally, catalyzes the attachment of serine to tRNA(Ser). Is also able to aminoacylate tRNA(Sec) with serine, to form the misacylated tRNA L-seryl-tRNA(Sec), which will be further converted into selenocysteinyl-tRNA(Sec). The protein is Serine--tRNA ligase of Neisseria meningitidis serogroup B (strain ATCC BAA-335 / MC58).